Here is a 217-residue protein sequence, read N- to C-terminus: Protein-methionine-sulfoxide reductase heme-binding subunit MsrQ (217 aa).

The next 4 membrane-spanning stretches (helical) occupy residues Met-82–Asp-102, Pro-118–Thr-138, Trp-150–Trp-170, and Glu-180–Trp-200.

It belongs to the MsrQ family. Heterodimer of a catalytic subunit (MsrP) and a heme-binding subunit (MsrQ). FMN serves as cofactor. Heme b is required as a cofactor.

It localises to the cell inner membrane. Its function is as follows. Part of the MsrPQ system that repairs oxidized periplasmic proteins containing methionine sulfoxide residues (Met-O), using respiratory chain electrons. Thus protects these proteins from oxidative-stress damage caused by reactive species of oxygen and chlorine generated by the host defense mechanisms. MsrPQ is essential for the maintenance of envelope integrity under bleach stress, rescuing a wide series of structurally unrelated periplasmic proteins from methionine oxidation. MsrQ provides electrons for reduction to the reductase catalytic subunit MsrP, using the quinone pool of the respiratory chain. This Ralstonia nicotianae (strain ATCC BAA-1114 / GMI1000) (Ralstonia solanacearum) protein is Protein-methionine-sulfoxide reductase heme-binding subunit MsrQ.